The chain runs to 97 residues: uncharacterized protein (97 aa).

The disordered stretch occupies residues 38–97 (TSPPDWNKFSGKVSINEPTTSKSKSKSTSTSTSTSTSTSTSTSTSSSTSSTSSTTSSINK). Low complexity predominate over residues 56–97 (TTSKSKSKSTSTSTSTSTSTSTSTSTSSSTSSTSSTTSSINK).

This is an uncharacterized protein from Dictyostelium discoideum (Social amoeba).